The chain runs to 1288 residues: Photoreceptor cilium actin regulator (1288 aa).

Residue G2 is the site of N-myristoyl glycine attachment. C3 carries the S-palmitoyl cysteine lipid modification. Disordered stretches follow at residues 78 to 147, 368 to 401, 423 to 453, 467 to 527, 563 to 605, 686 to 707, 813 to 1109, 1132 to 1169, and 1190 to 1288; these read MGDP…KWKR, QTSWDLAPEPEEWKSVTSPHTEARQSGHTWQQSP, QPRAQDEARSPCLSSTSPENITSPPLKLGTS, PHLS…PFQA, DWSE…SHVE, QKCNPHPEDEQGKAGKLPNAIP, AAKS…EDSQ, EAKPPLSTAHPLTPPSLPPEAGGPLGNPAECWKNSSGP, and LRRT…EEVS. Composition is skewed to polar residues over residues 96-109, 382-401, and 434-453; these read TKTSSSQLNKSQSH, SVTSPHTEARQSGHTWQQSP, and CLSSTSPENITSPPLKLGTS. Residues 483 to 495 show a composition bias toward acidic residues; it reads DSEDSSPEEEEED. Polar residues-rich tracts occupy residues 848–857, 894–904, 927–946, and 966–976; these read SPESSKSTEN, SKSTASLTKPH, PPATSQSPEVKGGTWSQAEK, and PSGQNRTSESS. Positions 1018-1028 are enriched in low complexity; the sequence is PAQPSPSAVQT. 2 stretches are compositionally biased toward pro residues: residues 1051-1063 and 1071-1094; these read PHQPKLPNPPPES and PSPPTQHPEASPPFSIPSPSPPMS. The segment covering 1097–1106 has biased composition (basic and acidic residues); the sequence is QEHKETRDSE. The segment covering 1209-1226 has biased composition (polar residues); it reads DPTSTSYESQLGQNSSSE. Positions 1268–1277 are enriched in basic and acidic residues; the sequence is RTGHIQDKSQ. The span at 1278–1288 shows a compositional bias: polar residues; sequence PEAQPQQEEVS.

Specifically expressed in retina.

Its subcellular location is the cell projection. The protein localises to the cilium. It localises to the photoreceptor outer segment. It is found in the photoreceptor inner segment. Plays an essential role for normal photoreceptor cell maintenance and vision. The protein is Photoreceptor cilium actin regulator of Homo sapiens (Human).